The sequence spans 116 residues: MSTSAVTEPVDIVARLQSAGSAEEFFELLGVAYDPKLLNVARLHILRRMGQYLAGEDLEHLPGDEAAARCKAVLERAYADFVASSPLDQRVFKVLKDAVAPKTPKRPAFVPLDALK.

The protein belongs to the NifW family. As to quaternary structure, homotrimer; associates with NifD.

Functionally, may protect the nitrogenase Fe-Mo protein from oxidative damage. This is Nitrogenase-stabilizing/protective protein NifW from Rhodopseudomonas palustris (strain ATCC BAA-98 / CGA009).